The sequence spans 287 residues: Large ribosomal subunit protein uL2 (287 aa).

2 disordered regions span residues 25 to 57 (TKTEPEKSLTTSKHRAKGRNNTGRITSRRRGGG) and 203 to 287 (LSAG…GRES). Basic residues-rich tracts occupy residues 209-220 (GRNRWKGRRPKV) and 259-287 (TRNRKKLSSKFIVRRRRKSSKRGRGGRES).

This sequence belongs to the universal ribosomal protein uL2 family. In terms of assembly, part of the 50S ribosomal subunit. Forms a bridge to the 30S subunit in the 70S ribosome.

Functionally, one of the primary rRNA binding proteins. Required for association of the 30S and 50S subunits to form the 70S ribosome, for tRNA binding and peptide bond formation. It has been suggested to have peptidyltransferase activity; this is somewhat controversial. Makes several contacts with the 16S rRNA in the 70S ribosome. In Nostoc punctiforme (strain ATCC 29133 / PCC 73102), this protein is Large ribosomal subunit protein uL2.